The primary structure comprises 105 residues: Urease subunit gamma (105 aa).

The protein belongs to the urease gamma subunit family. In terms of assembly, heterotrimer of UreA (gamma), UreB (beta) and UreC (alpha) subunits. Three heterotrimers associate to form the active enzyme.

The protein localises to the cytoplasm. It catalyses the reaction urea + 2 H2O + H(+) = hydrogencarbonate + 2 NH4(+). Its pathway is nitrogen metabolism; urea degradation; CO(2) and NH(3) from urea (urease route): step 1/1. The polypeptide is Urease subunit gamma (Bacillus subtilis (strain 168)).